A 334-amino-acid chain; its full sequence is Protein-methionine-sulfoxide reductase catalytic subunit MsrP (334 aa).

The segment at residues 1-44 (MKKNQFLKESDVTAESVFFMKRRQVLKALGISAAALSLPHAAHA) is a signal peptide (tat-type signal). Mo-molybdopterin is bound by residues asparagine 88, 91–92 (YE), cysteine 146, threonine 181, asparagine 233, arginine 238, and 249–251 (GIK).

This sequence belongs to the MsrP family. Heterodimer of a catalytic subunit (MsrP) and a heme-binding subunit (MsrQ). Mo-molybdopterin serves as cofactor. Predicted to be exported by the Tat system. The position of the signal peptide cleavage has not been experimentally proven.

The protein localises to the periplasm. The enzyme catalyses L-methionyl-[protein] + a quinone + H2O = L-methionyl-(S)-S-oxide-[protein] + a quinol. It catalyses the reaction L-methionyl-[protein] + a quinone + H2O = L-methionyl-(R)-S-oxide-[protein] + a quinol. Its function is as follows. Part of the MsrPQ system that repairs oxidized periplasmic proteins containing methionine sulfoxide residues (Met-O), using respiratory chain electrons. Thus protects these proteins from oxidative-stress damage caused by reactive species of oxygen and chlorine generated by the host defense mechanisms. MsrPQ is essential for the maintenance of envelope integrity under bleach stress, rescuing a wide series of structurally unrelated periplasmic proteins from methionine oxidation, including the primary periplasmic chaperone SurA and the lipoprotein Pal. The catalytic subunit MsrP is non-stereospecific, being able to reduce both (R-) and (S-) diastereoisomers of methionine sulfoxide. This chain is Protein-methionine-sulfoxide reductase catalytic subunit MsrP, found in Escherichia coli O127:H6 (strain E2348/69 / EPEC).